The primary structure comprises 599 residues: Elongation factor 4 (599 aa).

The tr-type G domain occupies 4-186 (EHIRNFSIIA…EIVKKIPPPQ (183 aa)). GTP contacts are provided by residues 16-21 (DHGKST) and 133-136 (NKID).

It belongs to the TRAFAC class translation factor GTPase superfamily. Classic translation factor GTPase family. LepA subfamily.

It is found in the cell inner membrane. The enzyme catalyses GTP + H2O = GDP + phosphate + H(+). In terms of biological role, required for accurate and efficient protein synthesis under certain stress conditions. May act as a fidelity factor of the translation reaction, by catalyzing a one-codon backward translocation of tRNAs on improperly translocated ribosomes. Back-translocation proceeds from a post-translocation (POST) complex to a pre-translocation (PRE) complex, thus giving elongation factor G a second chance to translocate the tRNAs correctly. Binds to ribosomes in a GTP-dependent manner. In Geobacter sp. (strain M21), this protein is Elongation factor 4.